The chain runs to 334 residues: Galactosylgalactosylxylosylprotein 3-beta-glucuronosyltransferase 1 (334 aa).

Over 1 to 6 (MPKRRD) the chain is Cytoplasmic. An essential for transport from endoplasmic reticulum to Golgi apparatus and interaction with SAR1A region spans residues 3–5 (KRR). Residues 7 to 27 (ILAIVLIVLPWTLLITVWHQS) form a helical; Signal-anchor for type II membrane protein membrane-spanning segment. Residues 28–334 (TLAPLLAVHK…KGFTDPSVEI (307 aa)) are Lumenal-facing. The tract at residues 37-56 (KDEGSDPRRETPPGADPREY) is disordered. 91–93 (PTY) serves as a coordination point for UDP-alpha-D-glucuronate. Phosphothreonine is present on residues Thr-103 and Thr-108. Asp-122 is a binding site for UDP-alpha-D-glucuronate. The N-linked (GlcNAc...) asparagine glycan is linked to Asn-140. UDP-alpha-D-glucuronate contacts are provided by Arg-165 and Arg-170. Asn-184 carries N-linked (GlcNAc...) asparagine glycosylation. 195 to 197 (DDD) serves as a coordination point for UDP-alpha-D-glucuronate. Mn(2+) is bound at residue Asp-197. An interaction with galactose moiety of substrate glycoprotein region spans residues 245 to 254 (FDPHRPFAID). The active-site Proton donor/acceptor is the Glu-284. Asn-303 carries N-linked (GlcNAc...) asparagine glycosylation. UDP-alpha-D-glucuronate is bound at residue 311–313 (HTR).

Belongs to the glycosyltransferase 43 family. In terms of assembly, homodimer. Interacts with SAR1A. Mn(2+) serves as cofactor. In terms of processing, the soluble form derives from the membrane form by proteolytic processing. In terms of tissue distribution, mainly expressed in the brain.

It localises to the golgi apparatus membrane. It is found in the secreted. The protein localises to the endoplasmic reticulum membrane. It carries out the reaction 3-O-(beta-D-galactosyl-(1-&gt;3)-beta-D-galactosyl-(1-&gt;4)-beta-D-xylosyl)-L-seryl-[protein] + UDP-alpha-D-glucuronate = 3-O-(beta-D-GlcA-(1-&gt;3)-beta-D-Gal-(1-&gt;3)-beta-D-Gal-(1-&gt;4)-beta-D-Xyl)-L-seryl-[protein] + UDP + H(+). It participates in protein modification; protein glycosylation. Involved in the biosynthesis of L2/HNK-1 carbohydrate epitope on glycoproteins. Can also play a role in glycosaminoglycan biosynthesis. Substrates include asialo-orosomucoid (ASOR), asialo-fetuin, and asialo-neural cell adhesion molecule. Requires sphingomyelin for activity: stearoyl-sphingomyelin was the most effective, followed by palmitoyl-sphingomyelin and lignoceroyl-sphingomyelin. Activity was demonstrated only for sphingomyelin with a saturated fatty acid and not for that with an unsaturated fatty acid, regardless of the length of the acyl group. The chain is Galactosylgalactosylxylosylprotein 3-beta-glucuronosyltransferase 1 from Homo sapiens (Human).